The sequence spans 392 residues: Integrin-linked kinase-associated serine/threonine phosphatase 2C (392 aa).

Met1 carries the N-acetylmethionine modification. Residues 1–91 (MDLFGDLPEP…PEEEKNGGEE (91 aa)) form a disordered region. Over residues 56–70 (SGNSGSLATSGSQVV) the composition is skewed to polar residues. Residues 72–91 (TEGKGAKRKAPEEEKNGGEE) show a composition bias toward basic and acidic residues. The PPM-type phosphatase domain occupies 108–390 (KGYVAERKGE…DNVTVMVVRI (283 aa)). Mn(2+)-binding residues include Asp152 and Gly153. An N6-acetyllysine modification is found at Lys210. Residues Asp326 and Asp381 each coordinate Mn(2+).

It belongs to the PP2C family. In terms of assembly, interacts with ILK. Mg(2+) is required as a cofactor. Requires Mn(2+) as cofactor.

The protein resides in the cytoplasm. It carries out the reaction O-phospho-L-seryl-[protein] + H2O = L-seryl-[protein] + phosphate. It catalyses the reaction O-phospho-L-threonyl-[protein] + H2O = L-threonyl-[protein] + phosphate. Its function is as follows. Protein phosphatase that may play a role in regulation of cell cycle progression via dephosphorylation of its substrates whose appropriate phosphorylation states might be crucial for cell proliferation. Selectively associates with integrin linked kinase (ILK), to modulate cell adhesion and growth factor signaling. Inhibits the ILK-GSK3B signaling axis and may play an important role in inhibiting oncogenic transformation. The polypeptide is Integrin-linked kinase-associated serine/threonine phosphatase 2C (Ilkap) (Mus musculus (Mouse)).